A 145-amino-acid chain; its full sequence is Acidic phospholipase A2 (145 aa).

Positions 1 to 21 (MYPAHLLVLLAVCVSLLGAAS) are cleaved as a signal peptide. Residues 22-27 (IPPLPL) constitute a propeptide that is removed on maturation. Disulfide bonds link Cys38-Cys98, Cys54-Cys144, Cys56-Cys72, Cys71-Cys125, Cys78-Cys118, Cys87-Cys111, and Cys105-Cys116. Ca(2+)-binding residues include Tyr55 and Gly57. The active site involves His75. Asp76 is a Ca(2+) binding site. The active site involves Asp119.

It belongs to the phospholipase A2 family. Group I subfamily. D49 sub-subfamily. Ca(2+) is required as a cofactor. As to expression, expressed by the venom gland.

The protein localises to the secreted. The enzyme catalyses a 1,2-diacyl-sn-glycero-3-phosphocholine + H2O = a 1-acyl-sn-glycero-3-phosphocholine + a fatty acid + H(+). In terms of biological role, PLA2 catalyzes the calcium-dependent hydrolysis of the 2-acyl groups in 3-sn-phosphoglycerides. The protein is Acidic phospholipase A2 of Notechis scutatus scutatus (Mainland tiger snake).